Consider the following 363-residue polypeptide: Phosphoribosylformylglycinamidine cyclo-ligase (363 aa).

Belongs to the AIR synthase family.

Its subcellular location is the cytoplasm. The enzyme catalyses 2-formamido-N(1)-(5-O-phospho-beta-D-ribosyl)acetamidine + ATP = 5-amino-1-(5-phospho-beta-D-ribosyl)imidazole + ADP + phosphate + H(+). It functions in the pathway purine metabolism; IMP biosynthesis via de novo pathway; 5-amino-1-(5-phospho-D-ribosyl)imidazole from N(2)-formyl-N(1)-(5-phospho-D-ribosyl)glycinamide: step 2/2. The protein is Phosphoribosylformylglycinamidine cyclo-ligase of Bartonella tribocorum (strain CIP 105476 / IBS 506).